The sequence spans 302 residues: D-alanine--D-alanine ligase (302 aa).

The ATP-grasp domain maps to 104-296; it reads KLVFERFAIP…FPDLVTWLVE (193 aa). 130–183 is a binding site for ATP; that stretch reads AMARPYVVKPLDQGSSVGVTIVTSETNDLPFSRDDWPYGRQVMVERFIPGRELT. Residues Asp-251, Glu-263, and Asn-265 each contribute to the Mg(2+) site.

This sequence belongs to the D-alanine--D-alanine ligase family. Mg(2+) serves as cofactor. It depends on Mn(2+) as a cofactor.

It localises to the cytoplasm. It carries out the reaction 2 D-alanine + ATP = D-alanyl-D-alanine + ADP + phosphate + H(+). It participates in cell wall biogenesis; peptidoglycan biosynthesis. Its function is as follows. Cell wall formation. This chain is D-alanine--D-alanine ligase, found in Rhodospirillum rubrum (strain ATCC 11170 / ATH 1.1.1 / DSM 467 / LMG 4362 / NCIMB 8255 / S1).